The chain runs to 218 residues: Ubiquitin-conjugating enzyme E2-24 kDa (218 aa).

The region spanning 3-148 (SSKRRIETDV…IKEYIDKYAT (146 aa)) is the UBC core domain. Cys-85 functions as the Glycyl thioester intermediate in the catalytic mechanism. Residues 154-218 (QMFGGDNDSD…DDDYDEVANQ (65 aa)) are disordered. Composition is skewed to acidic residues over residues 160–183 (NDSDDSDSGGDLQEEDSDSDEDMD) and 192–218 (DSVDELSEDLSDIDVSDDDDYDEVANQ).

The protein belongs to the ubiquitin-conjugating enzyme family.

The protein localises to the cytoplasm. The enzyme catalyses S-ubiquitinyl-[E1 ubiquitin-activating enzyme]-L-cysteine + [E2 ubiquitin-conjugating enzyme]-L-cysteine = [E1 ubiquitin-activating enzyme]-L-cysteine + S-ubiquitinyl-[E2 ubiquitin-conjugating enzyme]-L-cysteine.. It functions in the pathway protein modification; protein ubiquitination. Functionally, catalyzes the covalent attachment of ubiquitin to other proteins. Required for the adaptation to the presence of glucose in the growth medium; mediates the degradation of enzymes involved in gluconeogenesis when cells are shifted to glucose-containing medium. Required for proteasome-dependent catabolite degradation of fructose-1,6-bisphosphatase (FBP1). This Saccharomyces cerevisiae (strain ATCC 204508 / S288c) (Baker's yeast) protein is Ubiquitin-conjugating enzyme E2-24 kDa (UBC8).